A 217-amino-acid chain; its full sequence is DNA helicase assembly protein (217 aa).

It belongs to the Tequatrovirus DNA helicase assembly protein family. Monomer. Homohexamer; when associated with DNA. Interacts (via C-terminus) with the DnaB-like replicative helicase (via C-terminus); this interaction brings about the rapid assembly of the helicase onto ssDNA. Interacts (via C-terminus) with the single-stranded DNA-binding protein; a ternary complex between the helicase assembly protein, the single-stranded DNA-binding protein and ssDNA is an obligatory intermediate in the helicase loading mechanism. Interacts with the viral DNA polymerase. Binds to single and double-stranded DNA. Part of the replicase complex that includes the DNA polymerase, the polymerase clamp, the clamp loader complex, the single-stranded DNA binding protein (SSB), the primase, the DnaB-like replicative helicase and the helicase assembly factor.

Functionally, DNA helicase loader protein that participates in viral DNA replication, recombination, and repair. At the fork, required for loading of the replicative helicase onto DNA protected by the ssDNA-binding protein. Coordinates simultaneous synthesis of leading- and lagging-strands. The sequence is that of DNA helicase assembly protein from Enterobacteria phage T4 (Bacteriophage T4).